Reading from the N-terminus, the 295-residue chain is G1/S-specific cyclin-D1 (295 aa).

The Cyclin N-terminal domain maps to 28 to 152 (LRAMLKTEET…LLVNKLKWNL (125 aa)). The tract at residues 262 to 283 (AQQNVDPKATEEEGEVEEEAGL) is disordered. Lys269 participates in a covalent cross-link: Glycyl lysine isopeptide (Lys-Gly) (interchain with G-Cter in ubiquitin). Thr286 bears the Phosphothreonine mark.

The protein belongs to the cyclin family. Cyclin D subfamily. Interacts with either CDK4 or CDK6 protein kinase to form a serine/threonine kinase holoenzyme complex. The cyclin subunit imparts substrate specificity to the complex. Component of the ternary complex CCND1/CDK4/CDKN1B required for nuclear translocation and modulation of CDK4-mediated kinase activity. Interacts directly with CDKN1B. Can form similar complexes with either CDKN1A or CDKN2A. Interacts with UHRF2; the interaction ubiquitinates CCND1 and appears to occur independently of phosphorylation. Interacts with USP2. Interacts (via cyclin N-terminal domain) with INSM1 (via N-terminal region); the interaction competes with the binding of CCND1 to CDK4 during cell cycle progression and inhibits CDK4 activity. Interacts with CDK4; the interaction is prevented with the binding of CCND1 to INSM1 during cell cycle progression. In terms of processing, phosphorylation at Thr-286 by MAP kinases is required for ubiquitination and degradation by the DCX(AMBRA1) complex. It also plays an essential role for recognition by the FBXO31 component of SCF (SKP1-cullin-F-box) protein ligase complex following DNA damage. Ubiquitinated at Lys-269 by the DCX(AMBRA1) complex during the transition from G1 to S cell phase, leading to its degradation: ubiquitination is dependent on Thr-286 phosphorylation. The DCX(AMBRA1) complex represents the major regulator of CCND1 stability during the G1/S transition. Also ubiquitinated by the SCF(FBXO4) and Cul7-RING(FBXW8) ubiquitin-protein ligase complexes. Following DNA damage it is ubiquitinated by the SCF(FBXO31) protein ligase complex. SCF(FBXO31) ubiquitination is dependent on Thr-286 phosphorylation. Ubiquitinated also by UHRF2 apparently in a phosphorylation-independent manner. Ubiquitination leads to its degradation and G1 arrest. Deubiquitinated by USP2; leading to its stabilization. Expressed in the intestinal epithelium.

The protein resides in the nucleus. It localises to the cytoplasm. It is found in the nucleus membrane. Functionally, regulatory component of the cyclin D1-CDK4 (DC) complex that phosphorylates and inhibits members of the retinoblastoma (RB) protein family including RB1 and regulates the cell-cycle during G(1)/S transition. Phosphorylation of RB1 allows dissociation of the transcription factor E2F from the RB/E2F complex and the subsequent transcription of E2F target genes which are responsible for the progression through the G(1) phase. Hypophosphorylates RB1 in early G(1) phase. Cyclin D-CDK4 complexes are major integrators of various mitogenenic and antimitogenic signals. Also a substrate for SMAD3, phosphorylating SMAD3 in a cell-cycle-dependent manner and repressing its transcriptional activity. Component of the ternary complex, cyclin D1/CDK4/CDKN1B, required for nuclear translocation and activity of the cyclin D-CDK4 complex. Exhibits transcriptional corepressor activity with INSM1 on the NEUROD1 and INS promoters in a cell cycle-independent manner. The chain is G1/S-specific cyclin-D1 (Ccnd1) from Mus musculus (Mouse).